An 883-amino-acid chain; its full sequence is Envelope glycoprotein B (883 aa).

An N-terminal signal peptide occupies residues Met-1–Ser-31. Topologically, residues Gln-32–Pro-750 are virion surface. Intrachain disulfides connect Cys-77/Cys-535, Cys-94/Cys-491, Cys-167/Cys-229, Cys-321/Cys-369, and Cys-558/Cys-608. N-linked (GlcNAc...) asparagine; by host glycans are attached at residues Asn-102 and Asn-121. An involved in fusion and/or binding to host membrane region spans residues Thr-134–Arg-140. An N-linked (GlcNAc...) asparagine; by host glycan is attached at Asn-211. The involved in fusion and/or binding to host membrane stretch occupies residues His-216–Thr-223. Asn-262 and Asn-360 each carry an N-linked (GlcNAc...) asparagine; by host glycan. The tract at residues Gln-428 to Ile-457 is disordered. N-linked (GlcNAc...) asparagine; by host glycans are attached at residues Asn-579, Asn-635, and Asn-649. Hydrophobic membrane proximal region regions lie at residues Ile-694–Ser-748 and Ala-724–Ala-744. The chain crosses the membrane as a helical span at residues Phe-751–Phe-771. The Intravirion segment spans residues Lys-772 to Glu-883. The disordered stretch occupies residues Pro-791–Asp-817. Positions Asp-806 to Asp-817 are enriched in acidic residues. The Internalization motif motif lies at Tyr-868–Leu-871.

It belongs to the herpesviridae glycoprotein B family. As to quaternary structure, homotrimer; disulfide-linked. Binds to heparan sulfate proteoglycans. Interacts with gH/gL heterodimer. A proteolytic cleavage by host furin generates two subunits that remain linked by disulfide bonds.

It localises to the virion membrane. The protein localises to the host cell membrane. Its subcellular location is the host endosome membrane. It is found in the host Golgi apparatus membrane. Functionally, envelope glycoprotein that forms spikes at the surface of virion envelope. Essential for the initial attachment to heparan sulfate moieties of the host cell surface proteoglycans. Involved in fusion of viral and cellular membranes leading to virus entry into the host cell. Following initial binding to its host receptors, membrane fusion is mediated by the fusion machinery composed at least of gB and the heterodimer gH/gL. May be involved in the fusion between the virion envelope and the outer nuclear membrane during virion egress. The chain is Envelope glycoprotein B from Infectious laryngotracheitis virus (strain SA-2) (ILTV).